Consider the following 364-residue polypeptide: Aminomethyltransferase (364 aa).

Belongs to the GcvT family. The glycine cleavage system is composed of four proteins: P, T, L and H.

The catalysed reaction is N(6)-[(R)-S(8)-aminomethyldihydrolipoyl]-L-lysyl-[protein] + (6S)-5,6,7,8-tetrahydrofolate = N(6)-[(R)-dihydrolipoyl]-L-lysyl-[protein] + (6R)-5,10-methylene-5,6,7,8-tetrahydrofolate + NH4(+). Its function is as follows. The glycine cleavage system catalyzes the degradation of glycine. This is Aminomethyltransferase from Bacillus licheniformis (strain ATCC 14580 / DSM 13 / JCM 2505 / CCUG 7422 / NBRC 12200 / NCIMB 9375 / NCTC 10341 / NRRL NRS-1264 / Gibson 46).